Consider the following 470-residue polypeptide: Argininosuccinate lyase (470 aa).

Belongs to the lyase 1 family. Argininosuccinate lyase subfamily.

It is found in the cytoplasm. The catalysed reaction is 2-(N(omega)-L-arginino)succinate = fumarate + L-arginine. It participates in amino-acid biosynthesis; L-arginine biosynthesis; L-arginine from L-ornithine and carbamoyl phosphate: step 3/3. The sequence is that of Argininosuccinate lyase from Mycolicibacterium gilvum (strain PYR-GCK) (Mycobacterium gilvum (strain PYR-GCK)).